We begin with the raw amino-acid sequence, 622 residues long: Probable potassium transport system protein Kup (622 aa).

12 helical membrane-spanning segments follow: residues 8–28, 50–70, 103–123, 137–157, 169–189, 215–235, 247–267, 285–305, 337–357, 366–386, 393–413, and 419–439; these read LAALTLGAIGVVYGDIGTSVL, VLSILFWTLTTIVSLKYVVLV, LGIGVFGTSLFYGDGVITPAI, PHFGKAVIPLTLIVLFCLFAV, FGPVTLVWFTSIAALGVPHIV, FIILGAVVLCVTGAEALYADL, WFSVAMPALTINYFGQGALLL, ALIPLVIMATMATVIASQALI, IYIPFVNWALFLAIVLAVVMF, AYGIAVTLDMLITTVLTFFVI, PLALCIAATGFFFLVDLAFFG, and LLQGGWFPLMIGSIVFMLMMT.

Belongs to the HAK/KUP transporter (TC 2.A.72) family.

Its subcellular location is the cell inner membrane. It carries out the reaction K(+)(in) + H(+)(in) = K(+)(out) + H(+)(out). Functionally, transport of potassium into the cell. Likely operates as a K(+):H(+) symporter. This Paracidovorax citrulli (strain AAC00-1) (Acidovorax citrulli) protein is Probable potassium transport system protein Kup.